Reading from the N-terminus, the 174-residue chain is UPF0398 protein llmg_0513 (174 aa).

It belongs to the UPF0398 family.

This Lactococcus lactis subsp. cremoris (strain MG1363) protein is UPF0398 protein llmg_0513.